The sequence spans 427 residues: Tumor necrosis factor receptor superfamily member 16 (427 aa).

Residues 1 to 28 form the signal peptide; sequence MGAGATGRAMDGPRLLLLLLLGVSLGGA. The Extracellular portion of the chain corresponds to 29 to 250; the sequence is KEACPTGLYT…PVVTRGTTDN (222 aa). 4 TNFR-Cys repeats span residues 31 to 64, 66 to 107, 108 to 146, and 148 to 188; these read ACPTGLYTHSGECCKACNLGEGVAQPCGANQTVC, PCLD…DAVC, RCAYGYYQDETTGRCEACRVCEAGSGLVFSCQDKQNTVC, and ECPD…DAEC. Intrachain disulfides connect cysteine 32–cysteine 43, cysteine 44–cysteine 57, cysteine 47–cysteine 64, cysteine 67–cysteine 83, cysteine 86–cysteine 99, cysteine 89–cysteine 107, cysteine 109–cysteine 122, cysteine 125–cysteine 138, cysteine 128–cysteine 146, cysteine 149–cysteine 164, cysteine 167–cysteine 180, and cysteine 170–cysteine 188. Asparagine 60 is a glycosylation site (N-linked (GlcNAc...) asparagine). Residues 194–219 are disordered; sequence RWITRSTPPEGSDSTAPSTQEPEAPP. Over residues 197–214 the composition is skewed to polar residues; sequence TRSTPPEGSDSTAPSTQE. The helical transmembrane segment at 251–272 threads the bilayer; that stretch reads LIPVYCSILAAVVVGLVAYIAF. Residues 273–427 are Cytoplasmic-facing; that stretch reads KRWNSCKQNK…CSESTATSPV (155 aa). Polar residues-rich tracts occupy residues 281–291 and 305–326; these read NKQGANSRPVN and SGISVDSQSLHDQQPHTQTASG. The segment at 281 to 338 is disordered; the sequence is NKQGANSRPVNQTPPPEGEKLHSDSGISVDSQSLHDQQPHTQTASGQALKGDGGLYSS. The residue at position 311 (serine 311) is a Phosphoserine. Residues 326 to 341 are mediates interaction with KIDINS220; the sequence is GQALKGDGGLYSSLPP. The Death domain maps to 344–421; that stretch reads REEVEKLLNG…DLVESLCSES (78 aa).

Homodimer; disulfide-linked. Heterodimer with SORCS2. The extracellular domains of the heterodimer bind NGF. The cytoplasmic region of the heterodimer binds TRIO. NGF binding mediates dissociation of TRIO from the receptor complex. Interacts with RTN4R. Interacts with TRAF2, TRAF4, TRAF6, PTPN13 and RANBP9. Interacts through TRAF6 with SQSTM1 which bridges NGFR to NTRK1. Interacts with BEX1. Interacts with BEX3. Interacts with KIDINS220 and NTRK1. Can form a ternary complex with NTRK1 and KIDINS220 and this complex is affected by the expression levels of KIDINS220. An increase in KIDINS220 expression leads to a decreased association of NGFR and NTRK1. Interacts with NTRK2; may regulate the ligand specificity of the NTRK2 receptor. Interacts (via death domain) with RAB31. Interacts with LINGO1. Interacts with NRADD. Interacts with MAGED1; the interaction antagonizes the association NGFR:NTRK1. Interacts (via death domain) with ARHGDIA and RIPK2. Interacts with BFAR. N- and O-glycosylated. In terms of processing, O-linked glycans consist of Gal(1-3)GalNAc core elongated by 1 or 2 NeuNAc. Post-translationally, phosphorylated on serine residues.

It localises to the cell membrane. Its subcellular location is the cytoplasm. It is found in the perikaryon. The protein localises to the cell projection. The protein resides in the growth cone. It localises to the dendritic spine. Its function is as follows. Low affinity receptor which can bind to NGF, BDNF, NTF3, and NTF4. Forms a heterodimeric receptor with SORCS2 that binds the precursor forms of NGF, BDNF and NTF3 with high affinity, and has much lower affinity for mature NGF and BDNF. Plays an important role in differentiation and survival of specific neuronal populations during development. Can mediate cell survival as well as cell death of neural cells. Plays a role in the inactivation of RHOA. Plays a role in the regulation of the translocation of GLUT4 to the cell surface in adipocytes and skeletal muscle cells in response to insulin, probably by regulating RAB31 activity, and thereby contributes to the regulation of insulin-dependent glucose uptake. Necessary for the circadian oscillation of the clock genes BMAL1, PER1, PER2 and NR1D1 in the suprachiasmatic nucleus (SCmgetaN) of the brain and in liver and of the genes involved in glucose and lipid metabolism in the liver. Together with BFAR negatively regulates NF-kappa-B and JNK-related signaling pathways. This Homo sapiens (Human) protein is Tumor necrosis factor receptor superfamily member 16 (NGFR).